A 49-amino-acid polypeptide reads, in one-letter code: Light-harvesting protein B-875 beta chain (49 aa).

The Cytoplasmic segment spans residues 2-27 (ADKSDLGYTGLTDEQAQELHSVYMSG). Positions 21 and 39 each coordinate a bacteriochlorophyll. Residues 28 to 45 (LWLFSAVAIVAHLAVYIW) traverse the membrane as a helical; Signal-anchor for type II membrane protein segment. Topologically, residues 46–49 (RPWF) are periplasmic.

This sequence belongs to the antenna complex beta subunit family. The core complex is formed by different alpha and beta chains, binding bacteriochlorophyll molecules, and arranged most probably in tetrameric structures disposed around the reaction center. The non-pigmented gamma chains may constitute additional components.

The protein localises to the cell inner membrane. Antenna complexes are light-harvesting systems, which transfer the excitation energy to the reaction centers. The chain is Light-harvesting protein B-875 beta chain (pufB) from Cereibacter sphaeroides (strain ATCC 17023 / DSM 158 / JCM 6121 / CCUG 31486 / LMG 2827 / NBRC 12203 / NCIMB 8253 / ATH 2.4.1.) (Rhodobacter sphaeroides).